The chain runs to 311 residues: Methionyl-tRNA formyltransferase (311 aa).

109-112 is a binding site for (6S)-5,6,7,8-tetrahydrofolate; that stretch reads SLLP.

The protein belongs to the Fmt family.

The catalysed reaction is L-methionyl-tRNA(fMet) + (6R)-10-formyltetrahydrofolate = N-formyl-L-methionyl-tRNA(fMet) + (6S)-5,6,7,8-tetrahydrofolate + H(+). In terms of biological role, attaches a formyl group to the free amino group of methionyl-tRNA(fMet). The formyl group appears to play a dual role in the initiator identity of N-formylmethionyl-tRNA by promoting its recognition by IF2 and preventing the misappropriation of this tRNA by the elongation apparatus. This Moorella thermoacetica (strain ATCC 39073 / JCM 9320) protein is Methionyl-tRNA formyltransferase.